Consider the following 460-residue polypeptide: V-type ATP synthase beta chain 2 (460 aa).

Belongs to the ATPase alpha/beta chains family.

Its function is as follows. Produces ATP from ADP in the presence of a proton gradient across the membrane. The V-type beta chain is a regulatory subunit. This is V-type ATP synthase beta chain 2 from Clostridium tetani (strain Massachusetts / E88).